Here is a 522-residue protein sequence, read N- to C-terminus: Protein nucleotidyltransferase YdiU (522 aa).

ATP contacts are provided by G109, G111, R112, K132, D144, G145, R195, and R202. Residue D271 is the Proton acceptor of the active site. Residues N272 and D281 each coordinate Mg(2+). D281 serves as a coordination point for ATP.

Belongs to the SELO family. Mg(2+) is required as a cofactor. Requires Mn(2+) as cofactor.

It catalyses the reaction L-seryl-[protein] + ATP = 3-O-(5'-adenylyl)-L-seryl-[protein] + diphosphate. It carries out the reaction L-threonyl-[protein] + ATP = 3-O-(5'-adenylyl)-L-threonyl-[protein] + diphosphate. The enzyme catalyses L-tyrosyl-[protein] + ATP = O-(5'-adenylyl)-L-tyrosyl-[protein] + diphosphate. The catalysed reaction is L-histidyl-[protein] + UTP = N(tele)-(5'-uridylyl)-L-histidyl-[protein] + diphosphate. It catalyses the reaction L-seryl-[protein] + UTP = O-(5'-uridylyl)-L-seryl-[protein] + diphosphate. It carries out the reaction L-tyrosyl-[protein] + UTP = O-(5'-uridylyl)-L-tyrosyl-[protein] + diphosphate. Its function is as follows. Nucleotidyltransferase involved in the post-translational modification of proteins. It can catalyze the addition of adenosine monophosphate (AMP) or uridine monophosphate (UMP) to a protein, resulting in modifications known as AMPylation and UMPylation. The sequence is that of Protein nucleotidyltransferase YdiU from Burkholderia cenocepacia (strain HI2424).